A 639-amino-acid polypeptide reads, in one-letter code: ADP-ribosylation factor-binding protein GGA1 (639 aa).

M1 bears the N-acetylmethionine mark. Residues 17 to 147 (ATNPLNKELD…MLKKQGIVKS (131 aa)) form the VHS domain. The interval 114–274 (KILELLYSWT…RLASDTEDND (161 aa)) is interaction with ARF3. Positions 171 to 299 (DEEKSKMLAR…VINLYKQLVR (129 aa)) constitute a GAT domain. Phosphoserine is present on S185. The interval 300 to 509 (GEEVNGDATA…ITVPLESIKP (210 aa)) is unstructured hinge. Disordered stretches follow at residues 320-421 (LDLS…SGLD) and 434-492 (SLPP…QPVP). The residue at position 355 (S355) is a Phosphoserine; by CK2. Positions 358–362 (DDELM) match the Autoinhibitory motif. Residues 381–390 (GWNSFQSSDA) show a composition bias toward polar residues. Phosphoserine is present on S418. Residues 462–480 (SSSCSSPSSSATSLLHTVS) are compositionally biased toward low complexity. Pro residues predominate over residues 481 to 490 (PEPPRPPQQP). A GAE domain is found at 510–631 (SNILPVTVYD…NEMGDVDQFP (122 aa)).

This sequence belongs to the GGA protein family. Monomer. Interacts with GGA2 and GGA3. Binds to clathrin and activated ARFs, including ARF1, ARF5 and ARF6. Interacts with RABEP1. Interacts with RABGEF1. Interacts with the type-I membrane proteins LRP3, M6PR/CD-MPR and IGF2R/CI-MPR. Interacts (via N-terminal VHS domain) with SORL1/sorLA and SORT1 (via C-terminal cytosolic domain). Interacts with EPN4. Interacts with CCDC91. Interacts with HEATR5B/p200a. Interacts with SYNRG/gamma-synergin. Interacts (via GAE doamin) with NECAP1 and NECAP2. Interacts (via GAE domain) with AFTPH/aftiphilin. Interacts with TSG101 and UBC. Interacts with RNF11. Interacts (via VHS domain) with BACE1 (via DXXLL motif); the interaction highly increases when BACE1 is phosphorylated at 'Ser-498'. Interacts with CNST. Interacts with ADRA2B. Interacts with ARL3; the interaction recruits, in collaboration with RABEP1, PKD1:PKD2 complex to trans-Golgi network and is required for ciliary targeting. In terms of processing, phosphorylated by CK2 and dephosphorylated by PP2A. Phosphorylation of GGA1 allows the internal DXXLL motif to bind the VHS domain and to inhibit the recognition of cargo signals. Ubiquitinated. As to expression, ubiquitously expressed.

The protein resides in the golgi apparatus. It localises to the trans-Golgi network membrane. Its subcellular location is the endosome membrane. It is found in the early endosome membrane. Functionally, plays a role in protein sorting and trafficking between the trans-Golgi network (TGN) and endosomes. Mediates the ARF-dependent recruitment of clathrin to the TGN and binds ubiquitinated proteins and membrane cargo molecules with a cytosolic acidic cluster-dileucine (DXXLL) motif. Mediates export of the GPCR receptor ADRA2B to the cell surface. Required for targeting PKD1:PKD2 complex from the trans-Golgi network to the cilium membrane. Regulates retrograde transport of proteins such as phosphorylated form of BACE1 from endosomes to the trans-Golgi network. The chain is ADP-ribosylation factor-binding protein GGA1 (GGA1) from Homo sapiens (Human).